A 568-amino-acid chain; its full sequence is General O-oligosaccharyltransferase (568 aa).

The next 12 membrane-spanning stretches (helical) occupy residues 17–37 (VAVMRFLLLLLTAVLISLAWL), 46–66 (LTFASEMLSFAAFLSLLALFL), 78–98 (LALPVVFIPMIQWGFGLVVDF), 101–121 (ALLSSAYLLGFWLTMLLGYNL), 132–152 (FTLSSYLLFAVALLTSLIACI), 176–196 (FAQPNNMSTFLILGLLGCLYL), 214–234 (IVFAITLSQSRTAWVFGLFFI), 251–271 (YAVLLWAIGFFAVGLLFPRFT), 349–369 (LLVWNGWLLGGLITICILIWI), 376–396 (AKTTESIIACLMVSAVWIHTL), 397–417 (LEYPLQYAYFLLPVGFLMGLI), and 429–449 (VPVSVIRSIWVIGIMLLALIW).

It belongs to the PglL O-oligosaccharyltransferase family.

The protein localises to the cell membrane. Catalyzes the O-glycosylation of multiple protein targets. Is responsible for general protein glycosylation within A.baylyi ADP1. Does not act as an O-antigen ligase. The chain is General O-oligosaccharyltransferase from Acinetobacter baylyi (strain ATCC 33305 / BD413 / ADP1).